Consider the following 176-residue polypeptide: Peptide deformylase 1 (176 aa).

Residues cysteine 99 and histidine 141 each contribute to the Fe cation site. Glutamate 142 is a catalytic residue. Histidine 145 contacts Fe cation.

Belongs to the polypeptide deformylase family. Fe(2+) serves as cofactor.

It carries out the reaction N-terminal N-formyl-L-methionyl-[peptide] + H2O = N-terminal L-methionyl-[peptide] + formate. Functionally, removes the formyl group from the N-terminal Met of newly synthesized proteins. Requires at least a dipeptide for an efficient rate of reaction. N-terminal L-methionine is a prerequisite for activity but the enzyme has broad specificity at other positions. This Bordetella pertussis (strain Tohama I / ATCC BAA-589 / NCTC 13251) protein is Peptide deformylase 1.